Here is a 185-residue protein sequence, read N- to C-terminus: uncharacterized protein (185 aa).

Transmembrane regions (helical) follow at residues 4 to 24 (IAWM…LGLA), 35 to 55 (GLLF…ATGV), 60 to 80 (GASA…SIAY), 123 to 143 (VLAY…INDS), and 152 to 172 (ILKL…SYFI).

It is found in the cell membrane. This is an uncharacterized protein from Bacillus subtilis (strain 168).